Here is a 932-residue protein sequence, read N- to C-terminus: uncharacterized protein (932 aa).

Disordered regions lie at residues 26–120 (NINN…NMLT), 158–289 (MGIG…EEKK), 304–617 (NNNN…INHD), 635–720 (QQSQ…PPLV), and 802–863 (SVSS…FPLE). Composition is skewed to low complexity over residues 41–105 (NNNI…IISS) and 163–241 (NNNN…YGNN). Residues 242–253 (TPVNYIHNNSTP) are compositionally biased toward polar residues. Positions 265-285 (SDEEDSVLYSSDDSEESDYEE) are enriched in acidic residues. Residues 304–475 (NNNNINNNNM…NNNNNNNNNN (172 aa)) show a composition bias toward low complexity. 2 stretches are compositionally biased toward polar residues: residues 476 to 492 (ENYV…NTES) and 527 to 540 (DIPN…TKQQ). Over residues 548-590 (SPVYSPPNNLSPLSSPYLHHNSNNNSNNGGGNSNNNNTNFNYG) the composition is skewed to low complexity. Basic and acidic residues predominate over residues 606 to 617 (GERDPPHVINHD). 3 stretches are compositionally biased toward low complexity: residues 635–666 (QQSQ…PSSS), 696–707 (SPPNTSISSLSS), and 813–853 (NSSN…NNNS). Residues 854–863 (EPKKPKFPLE) are compositionally biased toward basic and acidic residues.

This is an uncharacterized protein from Dictyostelium discoideum (Social amoeba).